Consider the following 148-residue polypeptide: Small ribosomal subunit protein uS9 (148 aa).

The protein belongs to the universal ribosomal protein uS9 family.

In Drosophila melanogaster (Fruit fly), this protein is Small ribosomal subunit protein uS9 (RpS16).